The sequence spans 194 residues: MAFFCFIVLTYFIGAIPSGVWIGKAFKGVDVRDYGSKNSGATNSYRVLGAKLGVAVLIMDVLKGFIPLYIASKFNLVYNDLVILGLVAILAHTFSCFISFKGGKGVATSLGVFLFLIPVITLILLAIFILVAYFTKYVSLASITAAFLLPIFTFFTHKDSYLFALSVIIAVFVIYRHKTNISRLLSGTENKFKF.

Helical transmembrane passes span 2-22, 52-72, 80-100, 112-132, 137-157, and 161-181; these read AFFC…GVWI, LGVA…YIAS, DLVI…FISF, VFLF…ILVA, YVSL…FFTH, and YLFA…KTNI.

Belongs to the PlsY family. As to quaternary structure, probably interacts with PlsX.

Its subcellular location is the cell inner membrane. It catalyses the reaction an acyl phosphate + sn-glycerol 3-phosphate = a 1-acyl-sn-glycero-3-phosphate + phosphate. Its pathway is lipid metabolism; phospholipid metabolism. Functionally, catalyzes the transfer of an acyl group from acyl-phosphate (acyl-PO(4)) to glycerol-3-phosphate (G3P) to form lysophosphatidic acid (LPA). This enzyme utilizes acyl-phosphate as fatty acyl donor, but not acyl-CoA or acyl-ACP. In Fusobacterium nucleatum subsp. nucleatum (strain ATCC 25586 / DSM 15643 / BCRC 10681 / CIP 101130 / JCM 8532 / KCTC 2640 / LMG 13131 / VPI 4355), this protein is Glycerol-3-phosphate acyltransferase.